The following is a 203-amino-acid chain: Holliday junction branch migration complex subunit RuvA (203 aa).

A domain I region spans residues 1-63; that stretch reads MIGQLSGKVD…EEHIHLYGFL (63 aa). The interval 64 to 142 is domain II; it reads NLEEKIFFNL…KISSGSAIIK (79 aa). Residues 143 to 149 are flexible linker; that stretch reads ESLNIKH. The tract at residues 150–203 is domain III; sequence ITPVASNEVIKALVNLGFSRFEAQNAVQGIITQNPEISIDELIKTALKNRNSNF.

The protein belongs to the RuvA family. Homotetramer. Forms an RuvA(8)-RuvB(12)-Holliday junction (HJ) complex. HJ DNA is sandwiched between 2 RuvA tetramers; dsDNA enters through RuvA and exits via RuvB. An RuvB hexamer assembles on each DNA strand where it exits the tetramer. Each RuvB hexamer is contacted by two RuvA subunits (via domain III) on 2 adjacent RuvB subunits; this complex drives branch migration. In the full resolvosome a probable DNA-RuvA(4)-RuvB(12)-RuvC(2) complex forms which resolves the HJ.

Its subcellular location is the cytoplasm. The RuvA-RuvB-RuvC complex processes Holliday junction (HJ) DNA during genetic recombination and DNA repair, while the RuvA-RuvB complex plays an important role in the rescue of blocked DNA replication forks via replication fork reversal (RFR). RuvA specifically binds to HJ cruciform DNA, conferring on it an open structure. The RuvB hexamer acts as an ATP-dependent pump, pulling dsDNA into and through the RuvAB complex. HJ branch migration allows RuvC to scan DNA until it finds its consensus sequence, where it cleaves and resolves the cruciform DNA. The chain is Holliday junction branch migration complex subunit RuvA from Rickettsia africae (strain ESF-5).